The chain runs to 715 residues: Methylcrotonoyl-CoA carboxylase subunit alpha, mitochondrial (715 aa).

A mitochondrion-targeting transit peptide spans 1–38 (MAAAALLAAVDRNQLRRVPILLLQPREWPWKHRTVKYG). Residues 45 to 490 (ITKVLIANRG…HTDFIPQHHK (446 aa)) form the Biotin carboxylation domain. Residue Lys-159 participates in ATP binding. One can recognise an ATP-grasp domain in the interval 163–360 (KSIMAAAGVP…LVEWQLRIAA (198 aa)). N6-acetyllysine is present on Lys-193. ATP is bound by residues Lys-201 and 207-208 (GG). The residue at position 233 (Lys-233) is an N6-acetyllysine. The ATP site is built by His-251, His-278, and Glu-318. The active site involves Arg-335. Residue Lys-490 is modified to N6-acetyllysine. Residue Lys-577 is modified to N6-acetyllysine; alternate. An N6-succinyllysine; alternate modification is found at Lys-577. The Biotinyl-binding domain maps to 622–711 (SIEVGIPVPK…NRHAPLVEFE (90 aa)). At Lys-677 the chain carries N6-biotinyllysine.

In terms of assembly, probably a dodecamer composed of six biotin-containing alpha subunits (MCCC1) and six beta (MCCC2) subunits. Interacts (via the biotin carboxylation domain) with SIRT4. Biotin is required as a cofactor. Post-translationally, acetylated.

It localises to the mitochondrion matrix. The catalysed reaction is 3-methylbut-2-enoyl-CoA + hydrogencarbonate + ATP = 3-methyl-(2E)-glutaconyl-CoA + ADP + phosphate + H(+). It functions in the pathway amino-acid degradation; L-leucine degradation; (S)-3-hydroxy-3-methylglutaryl-CoA from 3-isovaleryl-CoA: step 2/3. Its function is as follows. Biotin-attachment subunit of the 3-methylcrotonyl-CoA carboxylase, an enzyme that catalyzes the conversion of 3-methylcrotonyl-CoA to 3-methylglutaconyl-CoA, a critical step for leucine and isovaleric acid catabolism. The sequence is that of Methylcrotonoyl-CoA carboxylase subunit alpha, mitochondrial from Rattus norvegicus (Rat).